The chain runs to 660 residues: Bifunctional polymyxin resistance protein ArnA (660 aa).

Residues 1–304 form a formyltransferase ArnAFT region; sequence MKTVVFAYHD…TLGLVQGSRL (304 aa). A (6R)-10-formyltetrahydrofolate-binding site is contributed by 86 to 88; the sequence is HLI. Residue His104 is the Proton donor; for formyltransferase activity of the active site. Residues Arg114 and 136–140 contribute to the (6R)-10-formyltetrahydrofolate site; that span reads VKRAD. The interval 314 to 660 is dehydrogenase ArnADH; it reads RRTRVLILGV…RTVDLTDKPS (347 aa). NAD(+) is bound by residues Asp347 and 368 to 369; that span reads DI. UDP-alpha-D-glucuronate-binding positions include Ala393, Tyr398, and 432 to 433; that span reads TS. Glu434 functions as the Proton acceptor; for decarboxylase activity in the catalytic mechanism. UDP-alpha-D-glucuronate-binding positions include Arg460, Asn492, 526-535, and Tyr613; that span reads KLIDGGKQKR. Catalysis depends on Arg619, which acts as the Proton donor; for decarboxylase activity.

This sequence in the N-terminal section; belongs to the Fmt family. UDP-L-Ara4N formyltransferase subfamily. It in the C-terminal section; belongs to the NAD(P)-dependent epimerase/dehydratase family. UDP-glucuronic acid decarboxylase subfamily. Homohexamer, formed by a dimer of trimers.

The catalysed reaction is UDP-alpha-D-glucuronate + NAD(+) = UDP-beta-L-threo-pentopyranos-4-ulose + CO2 + NADH. It catalyses the reaction UDP-4-amino-4-deoxy-beta-L-arabinose + (6R)-10-formyltetrahydrofolate = UDP-4-deoxy-4-formamido-beta-L-arabinose + (6S)-5,6,7,8-tetrahydrofolate + H(+). It functions in the pathway nucleotide-sugar biosynthesis; UDP-4-deoxy-4-formamido-beta-L-arabinose biosynthesis; UDP-4-deoxy-4-formamido-beta-L-arabinose from UDP-alpha-D-glucuronate: step 1/3. Its pathway is nucleotide-sugar biosynthesis; UDP-4-deoxy-4-formamido-beta-L-arabinose biosynthesis; UDP-4-deoxy-4-formamido-beta-L-arabinose from UDP-alpha-D-glucuronate: step 3/3. It participates in bacterial outer membrane biogenesis; lipopolysaccharide biosynthesis. Functionally, bifunctional enzyme that catalyzes the oxidative decarboxylation of UDP-glucuronic acid (UDP-GlcUA) to UDP-4-keto-arabinose (UDP-Ara4O) and the addition of a formyl group to UDP-4-amino-4-deoxy-L-arabinose (UDP-L-Ara4N) to form UDP-L-4-formamido-arabinose (UDP-L-Ara4FN). The modified arabinose is attached to lipid A and is required for resistance to polymyxin and cationic antimicrobial peptides. In Escherichia coli O17:K52:H18 (strain UMN026 / ExPEC), this protein is Bifunctional polymyxin resistance protein ArnA.